The primary structure comprises 489 residues: N-succinylglutamate 5-semialdehyde dehydrogenase (489 aa).

221–226 (GSSGTG) is a binding site for NAD(+). Active-site residues include Glu-244 and Cys-278.

It belongs to the aldehyde dehydrogenase family. AstD subfamily.

The catalysed reaction is N-succinyl-L-glutamate 5-semialdehyde + NAD(+) + H2O = N-succinyl-L-glutamate + NADH + 2 H(+). It participates in amino-acid degradation; L-arginine degradation via AST pathway; L-glutamate and succinate from L-arginine: step 4/5. In terms of biological role, catalyzes the NAD-dependent reduction of succinylglutamate semialdehyde into succinylglutamate. The chain is N-succinylglutamate 5-semialdehyde dehydrogenase from Sorangium cellulosum (strain So ce56) (Polyangium cellulosum (strain So ce56)).